Consider the following 450-residue polypeptide: Phosphoglucosamine mutase 2 (450 aa).

Residue Ser-101 is the Phosphoserine intermediate of the active site. The Mg(2+) site is built by Ser-101, Asp-245, Asp-247, and Asp-249. Phosphoserine is present on Ser-101.

It belongs to the phosphohexose mutase family. Requires Mg(2+) as cofactor. Post-translationally, activated by phosphorylation.

The enzyme catalyses alpha-D-glucosamine 1-phosphate = D-glucosamine 6-phosphate. Functionally, catalyzes the conversion of glucosamine-6-phosphate to glucosamine-1-phosphate. This Shewanella frigidimarina (strain NCIMB 400) protein is Phosphoglucosamine mutase 2.